The following is a 416-amino-acid chain: Gamma-glutamyl phosphate reductase (416 aa).

This sequence belongs to the gamma-glutamyl phosphate reductase family.

The protein resides in the cytoplasm. It carries out the reaction L-glutamate 5-semialdehyde + phosphate + NADP(+) = L-glutamyl 5-phosphate + NADPH + H(+). It participates in amino-acid biosynthesis; L-proline biosynthesis; L-glutamate 5-semialdehyde from L-glutamate: step 2/2. In terms of biological role, catalyzes the NADPH-dependent reduction of L-glutamate 5-phosphate into L-glutamate 5-semialdehyde and phosphate. The product spontaneously undergoes cyclization to form 1-pyrroline-5-carboxylate. This Vibrio vulnificus (strain CMCP6) protein is Gamma-glutamyl phosphate reductase.